The following is a 165-amino-acid chain: Protein FAM219A (165 aa).

Met-1 carries the N-acetylmethionine modification. The segment at 1 to 114 is disordered; it reads MMEEIDRFQV…SRYSSSGYSS (114 aa). Basic and acidic residues predominate over residues 32-44; sequence CDAREEKQRELAR. Over residues 49–63 the composition is skewed to polar residues; it reads KNGSMGSPVNQQPKK. A phosphoserine mark is found at Ser-55 and Ser-85. The residue at position 96 (Thr-96) is a Phosphothreonine. A phosphoserine mark is found at Ser-98 and Ser-105. Positions 105-114 are enriched in low complexity; sequence SRYSSSGYSS.

The protein belongs to the FAM219 family.

The chain is Protein FAM219A (FAM219A) from Macaca fascicularis (Crab-eating macaque).